A 118-amino-acid polypeptide reads, in one-letter code: Large ribosomal subunit protein bL20 (118 aa).

It belongs to the bacterial ribosomal protein bL20 family.

Binds directly to 23S ribosomal RNA and is necessary for the in vitro assembly process of the 50S ribosomal subunit. It is not involved in the protein synthesizing functions of that subunit. This is Large ribosomal subunit protein bL20 (rplT) from Aquifex aeolicus (strain VF5).